The following is an 836-amino-acid chain: Outer membrane usher protein PapC (836 aa).

The N-terminal stretch at 1–24 is a signal peptide; it reads MKDRIPFAVNNITCVILLSLFCNA. The cysteines at positions 814 and 832 are disulfide-linked.

Belongs to the fimbrial export usher family.

Its subcellular location is the cell outer membrane. Functionally, involved in the export and assembly of pili subunits across the outer membrane. Forms a hexameric ring-shaped pore in the outer bacterial membrane. The 2 nanometer-diameter pore allows the passage of the thin tip fibrillum. As for the rod, it probably unwinds into linear fibers which would therefore be narrow enough to pass through the pore. This Escherichia coli protein is Outer membrane usher protein PapC (papC).